The primary structure comprises 318 residues: Small ribosomal subunit biogenesis GTPase RsgA (318 aa).

Residues 82–246 (RQDEIRTKSF…LIDSPGFQEF (165 aa)) enclose the CP-type G domain. GTP is bound by residues 132–135 (NKSD) and 186–194 (GPSGAGKST). Residues cysteine 270, cysteine 275, histidine 277, and cysteine 283 each contribute to the Zn(2+) site.

The protein belongs to the TRAFAC class YlqF/YawG GTPase family. RsgA subfamily. In terms of assembly, monomer. Associates with 30S ribosomal subunit, binds 16S rRNA. The cofactor is Zn(2+).

It is found in the cytoplasm. Its function is as follows. One of several proteins that assist in the late maturation steps of the functional core of the 30S ribosomal subunit. Helps release RbfA from mature subunits. May play a role in the assembly of ribosomal proteins into the subunit. Circularly permuted GTPase that catalyzes slow GTP hydrolysis, GTPase activity is stimulated by the 30S ribosomal subunit. The protein is Small ribosomal subunit biogenesis GTPase RsgA of Variovorax paradoxus (strain S110).